The sequence spans 396 residues: Na(+)/H(+) antiporter NhaA 1 (396 aa).

11 consecutive transmembrane segments (helical) span residues 15–35 (AGIF…VGFL), 60–80 (LEFW…GLEL), 96–116 (FLPS…FAVI), 126–146 (GWAI…ALLG), 155–175 (IFVL…IALF), 179–199 (ALNF…LVMC), 207–227 (IPFV…GIHA), 255–275 (SLGY…NAGV), 290–312 (PLGV…SWFL), 329–349 (LYAV…VDNL), and 363–383 (LAIL…AKAV).

This sequence belongs to the NhaA Na(+)/H(+) (TC 2.A.33) antiporter family.

The protein localises to the cell inner membrane. It carries out the reaction Na(+)(in) + 2 H(+)(out) = Na(+)(out) + 2 H(+)(in). Functionally, na(+)/H(+) antiporter that extrudes sodium in exchange for external protons. The polypeptide is Na(+)/H(+) antiporter NhaA 1 (Campylobacter hominis (strain ATCC BAA-381 / DSM 21671 / CCUG 45161 / LMG 19568 / NCTC 13146 / CH001A)).